The sequence spans 373 residues: Indole glucosinolate O-methyltransferase 1 (373 aa).

Residues Gly217, Asp240, Asp260, Met261, and Lys274 each contribute to the S-adenosyl-L-homocysteine site. The Proton acceptor role is filled by His278.

It belongs to the class I-like SAM-binding methyltransferase superfamily. Cation-independent O-methyltransferase family. As to quaternary structure, interacts with B'GAMMA.

Its pathway is secondary metabolite biosynthesis. In terms of biological role, involved in indole glucosinolate biosynthesis. Catalyzes methoxylation reactions of the glucosinolate indole ring. Converts the hydroxy intermediates 4-hydroxy-indol-3-yl-methylglucosinolate (4OH-I3M) and 1-hydroxy-indol-3-yl-methylglucosinolate (1OH-I3M) to 4-methoxy-indol-3-yl-methylglucosinolate (4MO-I3M) and 1-methoxy-indol-3-yl-methylglucosinolate (1MO-I3M), respectively. This Arabidopsis thaliana (Mouse-ear cress) protein is Indole glucosinolate O-methyltransferase 1.